Reading from the N-terminus, the 145-residue chain is Globin (145 aa).

Residue serine 2 is modified to N-acetylserine. Residues 2–145 (SLSAAEADLV…IVAALKAAGK (144 aa)) form the Globin domain. Position 96 (histidine 96) interacts with heme b.

It belongs to the globin family. As to quaternary structure, monomer.

The protein is Globin of Aplysia kurodai (Kuroda's sea hare).